We begin with the raw amino-acid sequence, 121 residues long: Small ribosomal subunit protein bS6 (121 aa).

Positions 94-121 (KAETGPSAVMKRVEKEEARKSSQQETAA) are disordered. A compositionally biased stretch (basic and acidic residues) spans 104–115 (KRVEKEEARKSS).

It belongs to the bacterial ribosomal protein bS6 family.

Functionally, binds together with bS18 to 16S ribosomal RNA. This chain is Small ribosomal subunit protein bS6, found in Leptothrix cholodnii (strain ATCC 51168 / LMG 8142 / SP-6) (Leptothrix discophora (strain SP-6)).